Here is a 672-residue protein sequence, read N- to C-terminus: SHC SH2 domain-binding protein 1 (672 aa).

Ala-2 is modified (N-acetylalanine). The residue at position 5 (Ser-5) is a Phosphoserine. Thr-7 bears the Phosphothreonine mark. Residues Ser-31, Ser-42, Ser-44, Ser-47, and Ser-273 each carry the phosphoserine modification. PbH1 repeat units lie at residues Gly-428–His-451, Arg-452–Thr-473, Ser-474–Pro-496, Gly-497–Asp-518, and Ile-526–Lys-548. Residue Ser-634 is modified to Phosphoserine.

As to quaternary structure, interacts directly with isoform p52shc of SHC1 via its SH2 domain. Interacts with TRIM71; leading to enhanced SHCBP1 protein stability. Interacts with both members of the centralspindlin complex, KIF23 and RACGAP1.

The protein resides in the midbody. Its subcellular location is the cytoplasm. The protein localises to the cytoskeleton. It is found in the spindle. Functionally, may play a role in signaling pathways governing cellular proliferation, cell growth and differentiation. May be a component of a novel signaling pathway downstream of Shc. Acts as a positive regulator of FGF signaling in neural progenitor cells. In Homo sapiens (Human), this protein is SHC SH2 domain-binding protein 1 (SHCBP1).